Consider the following 118-residue polypeptide: Small ribosomal subunit protein bTHXc (118 aa).

The transit peptide at 1–55 (MASLILGAPPRVTVALPSSRLSSSHSETAGVSLSCFTHQFSLSTSSSSSIPLVYC) directs the protein to the chloroplast. Positions 61–118 (KTAKGKRFNHSFGNARPRNKSKGRGPERVPVPPAPPRKDKFENDEKIKIDIDESLFSN) are disordered. Over residues 96-111 (PRKDKFENDEKIKIDI) the composition is skewed to basic and acidic residues. Residue S117 is modified to Phosphoserine.

This sequence belongs to the bacterial ribosomal protein bTHX family. As to quaternary structure, part of the 30S ribosomal subunit.

Its subcellular location is the plastid. It localises to the chloroplast. This Arabidopsis thaliana (Mouse-ear cress) protein is Small ribosomal subunit protein bTHXc (RPS31).